A 111-amino-acid chain; its full sequence is Cytochrome c-550 (111 aa).

Cys-13, Cys-16, His-17, and Met-90 together coordinate heme c.

Post-translationally, binds 1 heme c group covalently per subunit.

The protein is Cytochrome c-550 of Novispirillum itersonii (Aquaspirillum itersonii).